The following is a 32-amino-acid chain: U3-ctenitoxin-Pk1a (32 aa).

Cystine bridges form between Cys-3–Cys-17, Cys-10–Cys-21, and Cys-16–Cys-30.

The protein belongs to the neurotoxin 17 (21C2) family. Expressed by the venom gland.

It is found in the secreted. Functionally, may act as a neurotoxin. This chain is U3-ctenitoxin-Pk1a, found in Phoneutria keyserlingi (Brazilian wandering spider).